The sequence spans 468 residues: Envelope glycoprotein C (468 aa).

An N-terminal signal peptide occupies residues 1-30 (MWLPNLVRFVAVAYLICAGAILTYASGASA). The span at 31-50 (SSSQSTPATPTHTTPNLTTA) shows a compositional bias: low complexity. Residues 31–73 (SSSQSTPATPTHTTPNLTTAHGAGSDNTTNANGTESTHSHETT) are disordered. At 31–431 (SSSQSTPATP…IVEDRPVLTS (401 aa)) the chain is on the virion surface side. 9 N-linked (GlcNAc...) asparagine; by host glycosylation sites follow: asparagine 46, asparagine 57, asparagine 62, asparagine 92, asparagine 100, asparagine 131, asparagine 203, asparagine 208, and asparagine 269. A disulfide bridge links cysteine 76 with cysteine 93. Ig-like domains follow at residues 220-311 (PLLD…DEVS) and 321-416 (PSVF…DTVV). 3 disulfides stabilise this stretch: cysteine 239–cysteine 301, cysteine 340–cysteine 399, and cysteine 344–cysteine 373. The chain crosses the membrane as a helical span at residues 432–451 (IIAVTCGAAALALVVLITAV). Topologically, residues 452–468 (CFYCSKPSQAPYKKSDF) are cytoplasmic.

This sequence belongs to the herpesviridae glycoprotein C family. As to quaternary structure, interacts with host complement component C3; this interaction inhibits host immune response by disregulating complement cascade.

It localises to the virion membrane. Functionally, essential for the initial attachment to heparan sulfate moieties of the host cell surface proteoglycans. Also plays a role in host immune evasion by inhibiting the host complement cascade activation. This Equus caballus (Horse) protein is Envelope glycoprotein C (gC).